Consider the following 203-residue polypeptide: Glycerol-3-phosphate acyltransferase (203 aa).

6 helical membrane-spanning segments follow: residues Ile5–Leu25, Thr50–Pro70, Ile72–Met92, Val115–Phe135, Ile140–Leu160, and Leu162–Phe182.

This sequence belongs to the PlsY family. As to quaternary structure, probably interacts with PlsX.

It localises to the cell membrane. The catalysed reaction is an acyl phosphate + sn-glycerol 3-phosphate = a 1-acyl-sn-glycero-3-phosphate + phosphate. The protein operates within lipid metabolism; phospholipid metabolism. Functionally, catalyzes the transfer of an acyl group from acyl-phosphate (acyl-PO(4)) to glycerol-3-phosphate (G3P) to form lysophosphatidic acid (LPA). This enzyme utilizes acyl-phosphate as fatty acyl donor, but not acyl-CoA or acyl-ACP. This is Glycerol-3-phosphate acyltransferase from Roseiflexus sp. (strain RS-1).